The following is a 366-amino-acid chain: Spermidine/putrescine import ATP-binding protein PotA (366 aa).

The ABC transporter domain maps to 8-239; the sequence is IRFENVTKQF…PINKFVADFI (232 aa). 41 to 48 contributes to the ATP binding site; sequence GPSGCGKT.

This sequence belongs to the ABC transporter superfamily. Spermidine/putrescine importer (TC 3.A.1.11.1) family. The complex is composed of two ATP-binding proteins (PotA), two transmembrane proteins (PotB and PotC) and a solute-binding protein (PotD).

Its subcellular location is the cell membrane. The catalysed reaction is ATP + H2O + polyamine-[polyamine-binding protein]Side 1 = ADP + phosphate + polyamineSide 2 + [polyamine-binding protein]Side 1.. Part of the ABC transporter complex PotABCD involved in spermidine/putrescine import. Responsible for energy coupling to the transport system. The polypeptide is Spermidine/putrescine import ATP-binding protein PotA (Listeria innocua serovar 6a (strain ATCC BAA-680 / CLIP 11262)).